The chain runs to 319 residues: MNTNKIGVLLANLGTPDEPTTPAVKRYLKQFLSDPRVIDLPKFKWQFILNYMILSKRSPKVAKLYREIWTEQGSPLLAISRQQQQALQDYFNRQNQNVLVELGMSYGNPSIESATDRLIKAGVSKIIVLPLYPQYSSTTTASVLDAFARGLTQQRNIVPFEFIHSYHNDPLYIQALANTIQLAEDEKLLFSFHGIPKRYQTEGDFYPEHCQQTAQLVADKLSLTDEQWLVTYQSRFGDEEWLQPYTDETLETLPSQGVKKIAVICAGFSADCLETLEEIAEENKENFLNAGGQSYRYIPALNANTDHINALAKLIEAKI.

Positions 193 and 274 each coordinate Fe cation.

It belongs to the ferrochelatase family.

It is found in the cytoplasm. It catalyses the reaction heme b + 2 H(+) = protoporphyrin IX + Fe(2+). Its pathway is porphyrin-containing compound metabolism; protoheme biosynthesis; protoheme from protoporphyrin-IX: step 1/1. Catalyzes the ferrous insertion into protoporphyrin IX. The protein is Ferrochelatase of Actinobacillus pleuropneumoniae serotype 3 (strain JL03).